Reading from the N-terminus, the 144-residue chain is 3-hydroxyacyl-[acyl-carrier-protein] dehydratase FabZ (144 aa).

His-51 is a catalytic residue.

Belongs to the thioester dehydratase family. FabZ subfamily.

The protein localises to the cytoplasm. It catalyses the reaction a (3R)-hydroxyacyl-[ACP] = a (2E)-enoyl-[ACP] + H2O. In terms of biological role, involved in unsaturated fatty acids biosynthesis. Catalyzes the dehydration of short chain beta-hydroxyacyl-ACPs and long chain saturated and unsaturated beta-hydroxyacyl-ACPs. The sequence is that of 3-hydroxyacyl-[acyl-carrier-protein] dehydratase FabZ from Clostridium botulinum (strain ATCC 19397 / Type A).